We begin with the raw amino-acid sequence, 367 residues long: Acryloyl-CoA reductase electron transfer subunit beta (367 aa).

FAD is bound at residue valine 305–aspartate 333.

Heterohexadecamer; tetramer of tetramers. Each tetramer is composed of 2 alpha (AcrC), a beta (AcrA) and a gamma (AcrB) subunit.

The protein resides in the cytoplasm. Part of the ETF-acryloyl-CoA reductase complex involved in the pathway of L-alanine fermentation. The electron transfer flavoprotein (ETF) serves as a specific electron acceptor for acryloyl-CoA reductase. This Anaerotignum propionicum (Clostridium propionicum) protein is Acryloyl-CoA reductase electron transfer subunit beta (acrA).